The sequence spans 170 residues: Ureidoglycolate lyase (170 aa).

The protein belongs to the ureidoglycolate lyase family. As to quaternary structure, homodimer. It depends on Ni(2+) as a cofactor.

The catalysed reaction is (S)-ureidoglycolate = urea + glyoxylate. It participates in nitrogen metabolism; (S)-allantoin degradation. Functionally, catalyzes the catabolism of the allantoin degradation intermediate (S)-ureidoglycolate, generating urea and glyoxylate. Involved in the utilization of allantoin as nitrogen source. The chain is Ureidoglycolate lyase from Stutzerimonas stutzeri (strain A1501) (Pseudomonas stutzeri).